A 221-amino-acid chain; its full sequence is Sigma non-opioid intracellular receptor 1 (221 aa).

Topologically, residues 1 to 4 (MALW) are lumenal. A helical transmembrane segment spans residues 5-27 (RGLRAVLAVAGLAVAVQLLRGWL). Residues 28 to 221 (GSKSYVFNRE…STHLSELGFF (194 aa)) are Cytoplasmic-facing. An important for ligand-binding region spans residues 96–103 (SLTEYVLL). Positions 174–221 (FIPSTLGFALADTIFSTQDFLTLFYTVKVYGKALLLETSTHLSELGFF) are C-terminal hydrophobic region.

This sequence belongs to the ERG2 family. Homotrimer.

It localises to the nucleus inner membrane. The protein resides in the nucleus outer membrane. It is found in the nucleus envelope. The protein localises to the cytoplasmic vesicle. Its subcellular location is the endoplasmic reticulum membrane. It localises to the membrane. In terms of biological role, may function in lipid transport from the endoplasmic reticulum and be involved in a wide array of cellular functions probably through regulation of the biogenesis of lipid microdomains at the plasma membrane. May regulate calcium efflux at the endoplasmic reticulum. The protein is Sigma non-opioid intracellular receptor 1 (sigmar1) of Xenopus tropicalis (Western clawed frog).